The following is a 151-amino-acid chain: MNNELNQLDIQDILQLLPHRYPFLMVDRVVHYEMSEERKVLRAIKNVSFNEPFFQGHFPERPVFPGVLILEAMAQATGILAFRMVGKPNPGELYYFASIDNARFKRPVVPGDQLVLDVEYLKERRGIAKFTGVATVDGELVCSAELMCAKR.

Histidine 57 is an active-site residue.

This sequence belongs to the thioester dehydratase family. FabZ subfamily.

It is found in the cytoplasm. The enzyme catalyses a (3R)-hydroxyacyl-[ACP] = a (2E)-enoyl-[ACP] + H2O. Functionally, involved in unsaturated fatty acids biosynthesis. Catalyzes the dehydration of short chain beta-hydroxyacyl-ACPs and long chain saturated and unsaturated beta-hydroxyacyl-ACPs. The polypeptide is 3-hydroxyacyl-[acyl-carrier-protein] dehydratase FabZ (Tolumonas auensis (strain DSM 9187 / NBRC 110442 / TA 4)).